The primary structure comprises 355 residues: Probable sugar phosphate/phosphate translocator At3g10290 (355 aa).

The disordered stretch occupies residues 19–51; sequence QKKQPNLSISSTTKMNKKNPDQKSDMSSSSSSP. Positions 22-32 are enriched in polar residues; the sequence is QPNLSISSTTK. A run of 10 helical transmembrane segments spans residues 55–75, 89–109, 124–144, 150–170, 177–197, 198–218, 239–259, 277–297, 305–325, and 328–348; these read TLFISSLIILWYTSNIGVLLL, IFLTMCHMSACAILSYVSIVF, FLKVATLSIVFCASVVGGNIS, VSFNQAVGATTPFFTALFAYI, AWVTYGALVPVVTGVVIASGG, EPGFHWFGFIMCISATAARAF, LMLYMSPIAVIALLPVTIFME, YILLLVNSVMAYSANLLNFLV, TLQVLGNAKGAVAVVISILLF, and PVTVMGIGGYSITVLGVVAYG.

Belongs to the TPT transporter family. TPT (TC 2.A.7.9) subfamily.

It is found in the membrane. The protein is Probable sugar phosphate/phosphate translocator At3g10290 of Arabidopsis thaliana (Mouse-ear cress).